We begin with the raw amino-acid sequence, 248 residues long: Triosephosphate isomerase (248 aa).

Residues Asn-10 and Lys-12 each coordinate substrate. The active-site Electrophile is His-95. Glu-165 acts as the Proton acceptor in catalysis.

Belongs to the triosephosphate isomerase family. As to quaternary structure, homodimer.

The protein localises to the cytoplasm. The catalysed reaction is D-glyceraldehyde 3-phosphate = dihydroxyacetone phosphate. Its pathway is carbohydrate biosynthesis; gluconeogenesis. It functions in the pathway carbohydrate degradation; glycolysis; D-glyceraldehyde 3-phosphate from glycerone phosphate: step 1/1. The chain is Triosephosphate isomerase (TPI1) from Candida albicans (strain SC5314 / ATCC MYA-2876) (Yeast).